A 241-amino-acid chain; its full sequence is Kynurenine formamidase (241 aa).

The HGGXW motif lies at 23–27 (HGGAW). Ser95 (nucleophile) is an active-site residue. Residues Asp191 and His223 contribute to the active site.

Belongs to the kynurenine formamidase family. As to quaternary structure, homodimer.

It catalyses the reaction N-formyl-L-kynurenine + H2O = L-kynurenine + formate + H(+). Its pathway is amino-acid degradation; L-tryptophan degradation via kynurenine pathway; L-kynurenine from L-tryptophan: step 2/2. In terms of biological role, catalyzes the hydrolysis of N-formyl-L-kynurenine to L-kynurenine, the second step in the kynurenine pathway of tryptophan degradation. Kynurenine may be further oxidized to nicotinic acid, NAD(H) and NADP(H). Required for elimination of toxic metabolites. The polypeptide is Kynurenine formamidase (Eremothecium gossypii (strain ATCC 10895 / CBS 109.51 / FGSC 9923 / NRRL Y-1056) (Yeast)).